Here is a 199-residue protein sequence, read N- to C-terminus: RNA-binding protein, mRNA-processing factor 2a (199 aa).

One can recognise an RRM domain in the interval R20–A97.

As to quaternary structure, interacts with Bucky ball (BUC); to mediate Balbiani body formation and oocyte polarity during early oogenesis.

Its subcellular location is the cytoplasm. It is found in the nucleus. The protein localises to the stress granule. Its function is as follows. RNA-binding protein involved in the regulation of smooth muscle cell differentiation and proliferation in the gastrointestinal system. RNA-binding protein localized in Balbiani body (electron-dense aggregates in the oocyte) and germ plasm during oogenesis, and may be required to maintain germ plasm mRNA translational repression. Translational regulator during topographic map formation in the visual system. Establishes oocyte polarity through interaction with Bucky ball (BUC). Acts as a pre-mRNA alternative splicing regulator. Mediates ACTN1 and FLNB alternative splicing. Likely binds to mRNA tandem CAC trinucleotide or CA dinucleotide motifs. The polypeptide is RNA-binding protein, mRNA-processing factor 2a (Danio rerio (Zebrafish)).